The primary structure comprises 384 residues: MNVYQRPLMPWLPSGGRVRVAVVFGGRSNEHAVSCLSAGSILRNLDRQRFDVVAVGITPEGTWMLTDPNPDALAIANRQLPAVSCESGIELTLPADPRRSGQLVSLSHGAGLGAGEVLTSVDVVFPVLHGPYGEDGTIQGLLELARVPYVGAGVLASAAGMDKEFTKKLFAAEGLPLSAYTVLRPLRPTLHRQECERLSLPVFVKPARGGSSIGISRVSSWGQLPSAIAYARRHDPKVIVEAAVNGRELECGVLEMPDGTVAASAVGEIRVAGVSGSEDSFYDFTTKYLDDAAELDVPAKVDDDVADEVRQLAIQAFRAIDCQGLARVDFFLTDDGPVINEINTMPGFTMTSMYPKLWAVSSVDYPTLLATMVDTALARGVGMR.

Positions lysine 167–aspartate 374 constitute an ATP-grasp domain. An ATP-binding site is contributed by cysteine 195 to glutamate 250. Residues aspartate 329, glutamate 341, and asparagine 343 each coordinate Mg(2+).

Belongs to the D-alanine--D-alanine ligase family. Mg(2+) serves as cofactor. It depends on Mn(2+) as a cofactor.

Its subcellular location is the cytoplasm. It carries out the reaction 2 D-alanine + ATP = D-alanyl-D-alanine + ADP + phosphate + H(+). It participates in cell wall biogenesis; peptidoglycan biosynthesis. Its function is as follows. Cell wall formation. This chain is D-alanine--D-alanine ligase, found in Mycobacterium leprae (strain TN).